Consider the following 196-residue polypeptide: MEARLVLGSSSERRKAVLESFRIPFICVSPDFDERSIVYSGDPFEYTKELAWNKANVVRSQGFSDALIITADTVVVYKGEVFNKPESEEHAVEMLRTLSGSSHSVITTLVLMQNEKVLSASENTQVSFIDIPPQHLKTYVRSFSSLKRCGGYCVQDGGGLIIKQIEGCVYNIQGLPIKTLNQLLMEFNISLWDYLV.

The Proton acceptor role is filled by D72.

This sequence belongs to the Maf family. YhdE subfamily. A divalent metal cation is required as a cofactor.

Its subcellular location is the cytoplasm. It catalyses the reaction dTTP + H2O = dTMP + diphosphate + H(+). It carries out the reaction UTP + H2O = UMP + diphosphate + H(+). Functionally, nucleoside triphosphate pyrophosphatase that hydrolyzes dTTP and UTP. May have a dual role in cell division arrest and in preventing the incorporation of modified nucleotides into cellular nucleic acids. The protein is dTTP/UTP pyrophosphatase of Chlamydia trachomatis serovar A (strain ATCC VR-571B / DSM 19440 / HAR-13).